A 214-amino-acid chain; its full sequence is Orotate phosphoribosyltransferase (214 aa).

K26 provides a ligand contact to 5-phospho-alpha-D-ribose 1-diphosphate. 34-35 contacts orotate; sequence FF. 5-phospho-alpha-D-ribose 1-diphosphate contacts are provided by residues 72 to 73, R99, K100, K103, H105, and 124 to 132; these read YK and DDVITAGTA. Orotate-binding residues include T128 and R157.

This sequence belongs to the purine/pyrimidine phosphoribosyltransferase family. PyrE subfamily. Homodimer. Requires Mg(2+) as cofactor.

It carries out the reaction orotidine 5'-phosphate + diphosphate = orotate + 5-phospho-alpha-D-ribose 1-diphosphate. The protein operates within pyrimidine metabolism; UMP biosynthesis via de novo pathway; UMP from orotate: step 1/2. Its function is as follows. Catalyzes the transfer of a ribosyl phosphate group from 5-phosphoribose 1-diphosphate to orotate, leading to the formation of orotidine monophosphate (OMP). This is Orotate phosphoribosyltransferase from Pseudomonas fluorescens (strain Pf0-1).